The following is a 156-amino-acid chain: Transcription elongation factor GreA (156 aa).

Positions 45-66 (NAEYHSAKEKQSFIEGRIKELE) form a coiled coil.

The protein belongs to the GreA/GreB family.

Necessary for efficient RNA polymerase transcription elongation past template-encoded arresting sites. The arresting sites in DNA have the property of trapping a certain fraction of elongating RNA polymerases that pass through, resulting in locked ternary complexes. Cleavage of the nascent transcript by cleavage factors such as GreA or GreB allows the resumption of elongation from the new 3'terminus. GreA releases sequences of 2 to 3 nucleotides. This chain is Transcription elongation factor GreA, found in Jannaschia sp. (strain CCS1).